The primary structure comprises 353 residues: Rhodopsin (353 aa).

The Extracellular segment spans residues 1-36 (MNGTEGPYFYIPMVNTTGIVRSPYEYPQYYLVNPAA). Residues Asn2 and Asn15 are each glycosylated (N-linked (GlcNAc...) asparagine). The helical transmembrane segment at 37 to 61 (YAALGAYMFLLILLGFPINFLTLYV) threads the bilayer. The Cytoplasmic segment spans residues 62 to 73 (TIEHKKLRTPLN). Residues 74 to 96 (YILLNLAVANLFMVFGGFTTTMY) form a helical membrane-spanning segment. Residues 97-110 (TSMHGYFVLGRLGC) are Extracellular-facing. Cys110 and Cys187 form a disulfide bridge. A helical membrane pass occupies residues 111-133 (NLEGFFATLGGEIALWSLVVLAV). Positions 134 to 136 (ERW) match the 'Ionic lock' involved in activated form stabilization motif. Over 134-152 (ERWMVVCKPISNFRFGENH) the chain is Cytoplasmic. The helical transmembrane segment at 153-173 (AIMGLAFTWVMASACAVPPLV) threads the bilayer. The Extracellular portion of the chain corresponds to 174–202 (GWSRYIPEGMQCSCGIDYYTRAEGFNNES). An N-linked (GlcNAc...) asparagine glycan is attached at Asn200. Residues 203–224 (FVIYMFVCHFLIPLVVVFFCYG) form a helical membrane-spanning segment. The Cytoplasmic segment spans residues 225-252 (RLLCAVKEAAAAQQESETTQRAEREVSR). The chain crosses the membrane as a helical span at residues 253–274 (MVVIMVVAFLICWCPYAGVAWY). Residues 275–286 (IFTHQGSEFGPL) lie on the Extracellular side of the membrane. Residues 287 to 308 (FMTFPAFFAKSSSIYNPMIYIC) traverse the membrane as a helical segment. Lys296 carries the N6-(retinylidene)lysine modification. The Cytoplasmic segment spans residues 309 to 353 (MNKQFRHCMITTLCCGKNPFEEEEGASTTSKTEASSVSSSSVSPA). Residues Cys322 and Cys323 are each lipidated (S-palmitoyl cysteine). A disordered region spans residues 330–353 (EEEGASTTSKTEASSVSSSSVSPA). Residues 334–353 (ASTTSKTEASSVSSSSVSPA) are compositionally biased toward low complexity.

It belongs to the G-protein coupled receptor 1 family. Opsin subfamily. Phosphorylated on some or all of the serine and threonine residues present in the C-terminal region. In terms of processing, contains one covalently linked retinal chromophore.

Its subcellular location is the membrane. The protein localises to the cell projection. The protein resides in the cilium. It is found in the photoreceptor outer segment. Functionally, photoreceptor required for image-forming vision at low light intensity. While most salt water fish species use retinal as chromophore, most freshwater fish use 3-dehydroretinal, or a mixture of retinal and 3-dehydroretinal. Light-induced isomerization of 11-cis to all-trans retinal triggers a conformational change that activates signaling via G-proteins. Subsequent receptor phosphorylation mediates displacement of the bound G-protein alpha subunit by arrestin and terminates signaling. The sequence is that of Rhodopsin (rho) from Mugil cephalus (Flathead mullet).